The primary structure comprises 21 residues: Glucose-1-phosphate adenylyltransferase large subunit (21 aa).

Positions 1 to 21 (SVTADNASETKVREIGQEKSS) are disordered. Positions 8–21 (SETKVREIGQEKSS) are enriched in basic and acidic residues.

This sequence belongs to the bacterial/plant glucose-1-phosphate adenylyltransferase family. As to quaternary structure, heterotetramer.

It is found in the plastid. The protein resides in the chloroplast. The protein localises to the amyloplast. It catalyses the reaction alpha-D-glucose 1-phosphate + ATP + H(+) = ADP-alpha-D-glucose + diphosphate. It functions in the pathway glycan biosynthesis; starch biosynthesis. With respect to regulation, activated by 3'phosphoglycerate, inhibited by orthophosphate. Allosteric regulation. This protein plays a role in synthesis of starch. It catalyzes the synthesis of the activated glycosyl donor, ADP-glucose from Glc-1-P and ATP. This chain is Glucose-1-phosphate adenylyltransferase large subunit, found in Spinacia oleracea (Spinach).